We begin with the raw amino-acid sequence, 509 residues long: Ribonuclease Y (509 aa).

A helical transmembrane segment spans residues 5–25 (IIILLSVFCGIFFICFIICSS). The KH domain maps to 199–259 (TTNIVKLPSD…IRREIATRTL (61 aa)). Residues 325–418 (VLAHSIEVAK…VAIADSISAS (94 aa)) enclose the HD domain.

It belongs to the RNase Y family.

It localises to the cell membrane. Functionally, endoribonuclease that initiates mRNA decay. The chain is Ribonuclease Y from Mycoplasma mycoides subsp. mycoides SC (strain CCUG 32753 / NCTC 10114 / PG1).